A 148-amino-acid chain; its full sequence is Flavodoxin (148 aa).

Residues 4 to 145 form the Flavodoxin-like domain; that stretch reads VLIVYGSTTG…DVSAWAGRVV (142 aa).

It belongs to the flavodoxin family. FMN serves as cofactor.

Low-potential electron donor to a number of redox enzymes. The protein is Flavodoxin of Nitratidesulfovibrio vulgaris (strain DSM 19637 / Miyazaki F) (Desulfovibrio vulgaris).